A 480-amino-acid chain; its full sequence is Wax ester synthase/diacylglycerol acyltransferase 7 (480 aa).

The Cytoplasmic segment spans residues 1–193 (MTYGEEEPVS…LRSIFTIGST (193 aa)). The active-site Proton acceptor is the His135. Residues 194-214 (MRLLWNTTIDMLLLLATVLFL) form a helical membrane-spanning segment. Residues 215 to 329 (KDTKTPLKAG…VKDSKCRWGN (115 aa)) lie on the Lumenal side of the membrane. N-linked (GlcNAc...) asparagine glycosylation is present at Asn252. A helical membrane pass occupies residues 330–350 (YFSFIFLPFTIGLQTDPLVYL). The Cytoplasmic portion of the chain corresponds to 351-365 (KMSKSMMARKKHSYH). The chain crosses the membrane as a helical span at residues 366–386 (AALVYFIIKIVLKVFGAKAAA). The Lumenal portion of the chain corresponds to 387-480 (ELFDRPVRNT…KASLCERGLL (94 aa)). N-linked (GlcNAc...) asparagine glycosylation occurs at Asn395.

This sequence in the N-terminal section; belongs to the long-chain O-acyltransferase family. Expressed in roots, stems, leaves, flowers and siliques.

Its subcellular location is the cell membrane. It is found in the endoplasmic reticulum membrane. The protein localises to the golgi apparatus membrane. It carries out the reaction an acyl-CoA + a 1,2-diacyl-sn-glycerol = a triacyl-sn-glycerol + CoA. The enzyme catalyses a long chain fatty alcohol + a fatty acyl-CoA = a wax ester + CoA. Its pathway is glycerolipid metabolism; triacylglycerol biosynthesis. It functions in the pathway lipid metabolism. Functionally, bifunctional wax ester synthase/diacylglycerol acyltransferase that uses acyl-CoAs with 14, 16 and 18 carbons as substrates, preferably in combination with 16:0ol alcohol. Involved in cuticular wax biosynthesis. In Arabidopsis thaliana (Mouse-ear cress), this protein is Wax ester synthase/diacylglycerol acyltransferase 7.